A 372-amino-acid polypeptide reads, in one-letter code: Queuine tRNA-ribosyltransferase (372 aa).

Asp-92 serves as the catalytic Proton acceptor. Substrate contacts are provided by residues 92-96, Asp-146, Gln-188, and Gly-215; that span reads DSGGY. Residues 246–252 are RNA binding; the sequence is GIGSLRE. The Nucleophile role is filled by Asp-265. The tract at residues 270-274 is RNA binding; important for wobble base 34 recognition; sequence TRLGR. 4 residues coordinate Zn(2+): Cys-303, Cys-305, Cys-308, and His-334.

Belongs to the queuine tRNA-ribosyltransferase family. Homodimer. Within each dimer, one monomer is responsible for RNA recognition and catalysis, while the other monomer binds to the replacement base PreQ1. It depends on Zn(2+) as a cofactor.

The enzyme catalyses 7-aminomethyl-7-carbaguanine + guanosine(34) in tRNA = 7-aminomethyl-7-carbaguanosine(34) in tRNA + guanine. Its pathway is tRNA modification; tRNA-queuosine biosynthesis. In terms of biological role, catalyzes the base-exchange of a guanine (G) residue with the queuine precursor 7-aminomethyl-7-deazaguanine (PreQ1) at position 34 (anticodon wobble position) in tRNAs with GU(N) anticodons (tRNA-Asp, -Asn, -His and -Tyr). Catalysis occurs through a double-displacement mechanism. The nucleophile active site attacks the C1' of nucleotide 34 to detach the guanine base from the RNA, forming a covalent enzyme-RNA intermediate. The proton acceptor active site deprotonates the incoming PreQ1, allowing a nucleophilic attack on the C1' of the ribose to form the product. After dissociation, two additional enzymatic reactions on the tRNA convert PreQ1 to queuine (Q), resulting in the hypermodified nucleoside queuosine (7-(((4,5-cis-dihydroxy-2-cyclopenten-1-yl)amino)methyl)-7-deazaguanosine). This Prochlorococcus marinus subsp. pastoris (strain CCMP1986 / NIES-2087 / MED4) protein is Queuine tRNA-ribosyltransferase.